We begin with the raw amino-acid sequence, 529 residues long: Zinc finger protein 490 (529 aa).

A disordered region spans residues 1–53 (MRRNSSLSFQMERPLEEQVQSKWSSSQGRTGTGGSDVLQMQNSEHHGQSIKTQ). The KRAB domain occupies 57-132 (ISLEDVAVNF…ALCENKEDCP (76 aa)). 13 consecutive C2H2-type zinc fingers follow at residues 156–178 (CDCSVCGEVFMHQVSLNRHMRSH), 194–216 (HKCKECGKTFTRSSSIRTHERIH), 222–244 (YECKECGKAFAFLFSFRNHIRIH), 250–272 (YECKECGKAFRYLTALRRHEKNH), 278–300 (YKCKQCGKAFIYYQPFLTHERTH), 306–328 (YECKQCGKAFSCPTYLRSHEKTH), 334–356 (FVCRECGRAFFSHSSLRKHVKTH), 362–384 (YTCKKCGEAFKSSSSCEVHERTH), 390–412 (YECKQCGKAFNSSSYLQLHERVH), 418–440 (YECKECGKAFLYSTHFRIHERTH), 446–468 (YECKQCGRVFIYFSHLRRHERSH), 474–496 (CECKQCGKAFTCLNSLKVHKRIH), and 502–524 (FQCRQCGKAFSYSKSLHVHERTH).

It belongs to the krueppel C2H2-type zinc-finger protein family.

Its subcellular location is the nucleus. In terms of biological role, may be involved in transcriptional regulation. This Homo sapiens (Human) protein is Zinc finger protein 490 (ZNF490).